A 639-amino-acid chain; its full sequence is Uridine permease (639 aa).

Residues 1–37 form a disordered region; it reads MPVSDSGFDNSSKTMKDDTIPTEDYEEITKESEMGDA. At 1 to 162 the chain is on the cytoplasmic side; the sequence is MPVSDSGFDN…LQLGLNWWQT (162 aa). Position 54 is a phosphothreonine (threonine 54). Serine 56 carries the phosphoserine modification. A helical membrane pass occupies residues 163–180; the sequence is WICIWVGYTFVAFFLILG. Topologically, residues 181–200 are extracellular; it reads SKVGNNYHISFPISSRVSFG. Residues 201-225 form a helical membrane-spanning segment; it reads IYFSIWIVINRVVMACVWNSTLAYI. The Cytoplasmic segment spans residues 226-259; it reads GSQCVQLMLKAIFGTNLNTRIKDTIKNPNLTNFE. The helical transmembrane segment at 260 to 276 threads the bilayer; it reads FMCFMVFWVACLPFLWF. The Extracellular segment spans residues 277 to 283; sequence PPDKLRH. A helical transmembrane segment spans residues 284 to 305; that stretch reads IFALKSAITPFAAFGFLIWTLC. The Cytoplasmic segment spans residues 306–367; sequence KAKGHLALGS…KTYKSSVYSQ (62 aa). The helical transmembrane segment at 368–392 threads the bilayer; sequence LIALPVCYAIISLIGILSVSAAYTL. Topologically, residues 393–416 are extracellular; it reads YGVNYWSPLDILNRYLDNYTSGNR. A helical membrane pass occupies residues 417–435; the sequence is AGVFLISFIFAFDQLGANL. The Cytoplasmic segment spans residues 436 to 460; it reads SGNSIPAGTDLTALLPKFINIRRGS. Residues 461-477 traverse the membrane as a helical segment; it reads YICALISLAICPWDLLS. Residues 478-483 lie on the Extracellular side of the membrane; it reads SSSKFT. A helical membrane pass occupies residues 484–507; it reads TALAAYAVFLSAIAGVISADYFIV. Topologically, residues 508–537 are cytoplasmic; sequence RKGYVNIFHCYTDKPGSYYMYNKYGTNWRA. The chain crosses the membrane as a helical span at residues 538–562; sequence VVAYIFGIAPNFAGFLGSVGVSVPI. At 563-572 the chain is on the extracellular side; sequence GAMKVYYLNY. Residues 573-590 form a helical membrane-spanning segment; the sequence is FVGYLLAALSYCILVYFY. Residues 591-639 are Cytoplasmic-facing; it reads PIKGIPGDAKITDRKWLEEWVEVEEFGTEREAFEEYGGVSTGYEKIRYI. Lysine 635 is covalently cross-linked (Glycyl lysine isopeptide (Lys-Gly) (interchain with G-Cter in ubiquitin)).

It belongs to the purine-cytosine permease (2.A.39) family.

It is found in the membrane. In terms of biological role, high-affinity transport of uridine. In Saccharomyces cerevisiae (strain ATCC 204508 / S288c) (Baker's yeast), this protein is Uridine permease (FUI1).